The primary structure comprises 154 residues: Myoglobin (154 aa).

One can recognise a Globin domain in the interval 2–148 (GLSDGEWELV…FRNDIAAKYK (147 aa)). Serine 4 is modified (phosphoserine). A Phosphothreonine modification is found at threonine 68. Histidine 94 provides a ligand contact to heme b.

The protein belongs to the globin family. As to quaternary structure, monomeric.

Its subcellular location is the cytoplasm. It localises to the sarcoplasm. It catalyses the reaction Fe(III)-heme b-[protein] + nitric oxide + H2O = Fe(II)-heme b-[protein] + nitrite + 2 H(+). It carries out the reaction H2O2 + AH2 = A + 2 H2O. Functionally, monomeric heme protein which primary function is to store oxygen and facilitate its diffusion within muscle tissues. Reversibly binds oxygen through a pentacoordinated heme iron and enables its timely and efficient release as needed during periods of heightened demand. Depending on the oxidative conditions of tissues and cells, and in addition to its ability to bind oxygen, it also has a nitrite reductase activity whereby it regulates the production of bioactive nitric oxide. Under stress conditions, like hypoxia and anoxia, it also protects cells against reactive oxygen species thanks to its pseudoperoxidase activity. The protein is Myoglobin (MB) of Elephas maximus (Indian elephant).